The chain runs to 950 residues: Leucine--tRNA ligase (950 aa).

Positions 66–77 (PYPSGAGLHVGH) match the 'HIGH' region motif. Positions 721–725 (KIGKS) match the 'KMSKS' region motif. Lys724 contacts ATP.

It belongs to the class-I aminoacyl-tRNA synthetase family.

It localises to the cytoplasm. It catalyses the reaction tRNA(Leu) + L-leucine + ATP = L-leucyl-tRNA(Leu) + AMP + diphosphate. This chain is Leucine--tRNA ligase, found in Nocardia farcinica (strain IFM 10152).